The sequence spans 160 residues: Aspartate 1-decarboxylase 2 (160 aa).

The active-site Schiff-base intermediate with substrate; via pyruvic acid is the serine 25. Serine 25 is subject to Pyruvic acid (Ser). Substrate is bound at residue threonine 57. The Proton donor role is filled by tyrosine 58. 73-75 is a substrate binding site; it reads GAA.

This sequence belongs to the PanD family. In terms of assembly, heterooctamer of four alpha and four beta subunits. The cofactor is pyruvate. Post-translationally, is synthesized initially as an inactive proenzyme, which is activated by self-cleavage at a specific serine bond to produce a beta-subunit with a hydroxyl group at its C-terminus and an alpha-subunit with a pyruvoyl group at its N-terminus.

The protein resides in the cytoplasm. It carries out the reaction L-aspartate + H(+) = beta-alanine + CO2. Its pathway is cofactor biosynthesis; (R)-pantothenate biosynthesis; beta-alanine from L-aspartate: step 1/1. Its function is as follows. Catalyzes the pyruvoyl-dependent decarboxylation of aspartate to produce beta-alanine. This chain is Aspartate 1-decarboxylase 2, found in Frankia casuarinae (strain DSM 45818 / CECT 9043 / HFP020203 / CcI3).